Reading from the N-terminus, the 417-residue chain is Cytoplasmic tRNA 2-thiolation protein 2 (417 aa).

Acidic residues predominate over residues 1–11 (MCSIVEDDFGD). The segment at 1–24 (MCSIVEDDFGDEGGAHAMKEDTPQ) is disordered. Basic and acidic residues predominate over residues 13 to 22 (GGAHAMKEDT).

It belongs to the CTU2/NCS2 family.

Its subcellular location is the cytoplasm. It participates in tRNA modification; 5-methoxycarbonylmethyl-2-thiouridine-tRNA biosynthesis. Functionally, plays a central role in 2-thiolation of mcm(5)S(2)U at tRNA wobble positions of tRNA(Lys), tRNA(Glu) and tRNA(Gln). May act by forming a heterodimer with NCS6/CTU1 that ligates sulfur from thiocarboxylated URM1 onto the uridine of tRNAs at wobble position. The polypeptide is Cytoplasmic tRNA 2-thiolation protein 2 (Anopheles gambiae (African malaria mosquito)).